Reading from the N-terminus, the 287-residue chain is Probable endoribonuclease YicC (287 aa).

It belongs to the YicC/YloC family. It depends on a divalent metal cation as a cofactor.

Its function is as follows. Probably a ssRNA endonuclease. Functionally, might contribute to small RNA (sRNA) regulation. The sequence is that of Probable endoribonuclease YicC from Salmonella typhimurium (strain LT2 / SGSC1412 / ATCC 700720).